The following is a 377-amino-acid chain: RIB43A-like with coiled-coils protein 2 (377 aa).

Residues 188 to 238 adopt a coiled-coil conformation; that stretch reads ELKFDEAARDLQRLEITTRKAVCAAVKEFNKKQVVELAERKRQVKQQEQED. The tract at residues 355 to 377 is disordered; that stretch reads QLDAAPSSQPTEDYFSQFNTRSR. Residues 360–377 are compositionally biased toward polar residues; sequence PSSQPTEDYFSQFNTRSR.

Belongs to the RIB43A family. As to quaternary structure, microtubule inner protein component of sperm flagellar doublet microtubules.

Its subcellular location is the cytoplasm. The protein localises to the cytoskeleton. It localises to the cilium axoneme. The protein resides in the flagellum axoneme. Its function is as follows. Microtubule inner protein (MIP) part of the dynein-decorated doublet microtubules (DMTs) in cilia axoneme, which is required for motile cilia beating. The chain is RIB43A-like with coiled-coils protein 2 from Rattus norvegicus (Rat).